The primary structure comprises 24 residues: Brevinin-1BYa (24 aa).

A disulfide bond links C18 and C24.

Expressed by the skin glands.

The protein resides in the secreted. Functionally, antibacterial activity against Gram-positive bacterium S.aureus and Gram-negative bacterium E.coli. High antifungal activity against C.albicans and a strong hemolytic activity. This is Brevinin-1BYa from Rana boylii (Foothill yellow-legged frog).